The primary structure comprises 523 residues: GMP synthase [glutamine-hydrolyzing] (523 aa).

Positions 9-198 (PVLVVDYGAQ…LTEIAGLEQN (190 aa)) constitute a Glutamine amidotransferase type-1 domain. Cys86 acts as the Nucleophile in catalysis. Catalysis depends on residues His172 and Glu174. The GMPS ATP-PPase domain maps to 199 to 397 (WTAANIAEEL…LGLPEVIVAR (199 aa)). 227–233 (SGGVDSA) lines the ATP pocket.

Homodimer.

It catalyses the reaction XMP + L-glutamine + ATP + H2O = GMP + L-glutamate + AMP + diphosphate + 2 H(+). It functions in the pathway purine metabolism; GMP biosynthesis; GMP from XMP (L-Gln route): step 1/1. Its function is as follows. Catalyzes the synthesis of GMP from XMP. In Corynebacterium efficiens (strain DSM 44549 / YS-314 / AJ 12310 / JCM 11189 / NBRC 100395), this protein is GMP synthase [glutamine-hydrolyzing].